A 189-amino-acid chain; its full sequence is Peptidyl-tRNA hydrolase (189 aa).

Y17 contributes to the tRNA binding site. H22 (proton acceptor) is an active-site residue. 3 residues coordinate tRNA: F65, N67, and N113.

This sequence belongs to the PTH family. Monomer.

The protein localises to the cytoplasm. The catalysed reaction is an N-acyl-L-alpha-aminoacyl-tRNA + H2O = an N-acyl-L-amino acid + a tRNA + H(+). In terms of biological role, hydrolyzes ribosome-free peptidyl-tRNAs (with 1 or more amino acids incorporated), which drop off the ribosome during protein synthesis, or as a result of ribosome stalling. Its function is as follows. Catalyzes the release of premature peptidyl moieties from peptidyl-tRNA molecules trapped in stalled 50S ribosomal subunits, and thus maintains levels of free tRNAs and 50S ribosomes. The polypeptide is Peptidyl-tRNA hydrolase (Mycoplasma genitalium (strain ATCC 33530 / DSM 19775 / NCTC 10195 / G37) (Mycoplasmoides genitalium)).